The following is a 673-amino-acid chain: RAS guanyl-releasing protein 4 (673 aa).

Basic residues-rich tracts occupy residues methionine 1–serine 10 and glycine 20–threonine 32. Disordered stretches follow at residues methionine 1 to proline 34 and leucine 164 to glycine 188. Residues glycine 49–glycine 175 form the N-terminal Ras-GEF domain. Residues leucine 164 to proline 173 are compositionally biased toward low complexity. The 232-residue stretch at glutamate 201 to arginine 432 folds into the Ras-GEF domain. One can recognise an EF-hand domain in the interval histidine 466–alanine 501. The segment at leucine 540 to cysteine 590 adopts a Phorbol-ester/DAG-type zinc-finger fold. The segment at lysine 592–serine 633 is disordered.

This sequence belongs to the RASGRP family. As to expression, expressed by mast cells and their progenitors (at protein level). Expressed by dendritic cells. In terms of tissue distribution, expressed in neutrophils.

It localises to the cytoplasm. The protein localises to the cell membrane. Functions as a cation- and diacylglycerol (DAG)-regulated nucleotide exchange factor activating Ras through the exchange of bound GDP for GTP. In neutrophils, participates in a phospholipase C-activating N-formyl peptide-activated GPCR (G protein-coupled receptor) signaling pathway by promoting Ras-mediated activation of PIK3CG/PI3Kgamma to promote neutrophil functional responses. In CD117(+) dendritic cells and mast cells, participates in an lipopolysaccharide (LPS)-activated signaling pathway that stimulates the production of interferon-gamma and other pro-inflammatory cytokines by natural killer (NK) cells. May function in mast cell differentiation. Does not appear to be required for the development of B-cells, DC-cells, T-cells, or NK-cells. Functionally, binds diacylglycerol (DAG). Its function is as follows. Unable to bind diacylglycerol (DAG). In Mus musculus (Mouse), this protein is RAS guanyl-releasing protein 4 (Rasgrp4).